Reading from the N-terminus, the 822-residue chain is AP-1 complex subunit gamma-1 (822 aa).

Residues E597–L628 are disordered. The GAE domain occupies A702–P817.

The protein belongs to the adaptor complexes large subunit family. Adaptor protein complex 1 (AP-1) is a heterotetramer composed of two large adaptins (gamma-type subunit AP1G1 and beta-type subunit AP1B1), a medium adaptin (mu-type subunit AP1M1 or AP1M2) and a small adaptin (sigma-type subunit AP1S1 or AP1S2 or AP1S3). Interacts (via GAE domain) with RABEP1. Interacts with EPS15. Interacts with SYNRG/gamma-synergin. Interacts (via GAE domain) with AP1AR (via coiled-coil domain). Interacts with CLN3 (via dileucine motif); this interaction facilitates lysosomal targeting. Interacts (via GAE domain) with AFTPH/aftiphilin; the interaction is required to recruit AFTPH/aftiphilin to the perinuclear region of the cell.

The protein localises to the golgi apparatus. The protein resides in the cytoplasmic vesicle. Its subcellular location is the clathrin-coated vesicle membrane. It is found in the cytoplasm. It localises to the perinuclear region. The protein localises to the clathrin-coated vesicle. The protein resides in the membrane. Its subcellular location is the clathrin-coated pit. Subunit of clathrin-associated adaptor protein complex 1 that plays a role in protein sorting in the late-Golgi/trans-Golgi network (TGN) and/or endosomes. The AP complexes mediate both the recruitment of clathrin to membranes and the recognition of sorting signals within the cytosolic tails of transmembrane cargo molecules. In association with AFTPH/aftiphilin in the aftiphilin/p200/gamma-synergin complex, involved in the trafficking of transferrin from early to recycling endosomes, and the membrane trafficking of furin and the lysosomal enzyme cathepsin D between the trans-Golgi network (TGN) and endosomes. The polypeptide is AP-1 complex subunit gamma-1 (AP1G1) (Pongo abelii (Sumatran orangutan)).